A 309-amino-acid chain; its full sequence is MFSNLSKRWAQRTLSKSFYSTATGAASKSGKLTQKLVTAGVAAAGITASTLLYADSLTAEAMTAAEHGLHAPAYAWSHNGPFETFDHASIRRGYQVYREVCAACHSLDRVAWRTLVGVSHTNEEVRNMAEEFEYDDEPDEQGNPKKRPGKLSDYIPGPYPNEQAARAANQGALPPDLSLIVKARHGGCDYIFSLLTGYPDEPPAGVALPPGSNYNPYFPGGSIAMARVLFDDMVEYEDGTPATTSQMAKDVTTFLNWCAEPEHDERKRLGLKTVIILSSLYLLSIWVKKFKWAGIKTRKFVFNPPKPRK.

The transit peptide at M1–A61 directs the protein to the mitochondrion. At M62 to E262 the chain is on the mitochondrial intermembrane side. The region spanning A88 to P241 is the Cytochrome c domain. Heme c contacts are provided by C101, C104, and H105. A compositionally biased stretch (acidic residues) spans E131–E140. The tract at residues E131 to A168 is disordered. Residue M225 participates in heme c binding. Residues H263–K296 traverse the membrane as a helical segment. Residues T297–K309 lie on the Mitochondrial matrix side of the membrane.

Belongs to the cytochrome c family. In terms of assembly, component of the ubiquinol-cytochrome c oxidoreductase (cytochrome b-c1 complex, complex III, CIII), a multisubunit enzyme composed of 10 subunits. The complex is composed of 3 respiratory subunits cytochrome b (COB), cytochrome c1 (CYT1) and Rieske protein (RIP1), 2 core protein subunits COR1 and QCR2, and 5 low-molecular weight protein subunits QCR6, QCR7, QCR8, QCR9 and QCR10. The complex exists as an obligatory dimer and forms supercomplexes (SCs) in the inner mitochondrial membrane with a monomer or a dimer of cytochrome c oxidase (complex IV, CIV), resulting in 2 different assemblies (supercomplexes III(2)IV and III(2)IV(2)). CYT1 interacts with COX5A at the CIII-CIV interface. The cofactor is heme c.

It is found in the mitochondrion inner membrane. The catalysed reaction is a quinol + 2 Fe(III)-[cytochrome c](out) = a quinone + 2 Fe(II)-[cytochrome c](out) + 2 H(+)(out). Functionally, component of the ubiquinol-cytochrome c oxidoreductase, a multisubunit transmembrane complex that is part of the mitochondrial electron transport chain which drives oxidative phosphorylation. The respiratory chain contains 3 multisubunit complexes succinate dehydrogenase (complex II, CII), ubiquinol-cytochrome c oxidoreductase (cytochrome b-c1 complex, complex III, CIII) and cytochrome c oxidase (complex IV, CIV), that cooperate to transfer electrons derived from NADH and succinate to molecular oxygen, creating an electrochemical gradient over the inner membrane that drives transmembrane transport and the ATP synthase. The cytochrome b-c1 complex catalyzes electron transfer from ubiquinol to cytochrome c, linking this redox reaction to translocation of protons across the mitochondrial inner membrane, with protons being carried across the membrane as hydrogens on the quinol. In the process called Q cycle, 2 protons are consumed from the matrix, 4 protons are released into the intermembrane space and 2 electrons are passed to cytochrome c. Cytochrome c1 is a catalytic core subunit containing a c-type heme. It transfers electrons from the [2Fe-2S] iron-sulfur cluster of the Rieske protein to cytochrome c. The protein is Cytochrome c1, heme protein, mitochondrial (CYT1) of Saccharomyces cerevisiae (strain ATCC 204508 / S288c) (Baker's yeast).